We begin with the raw amino-acid sequence, 215 residues long: Redox-sensing transcriptional repressor Rex (215 aa).

Positions Leu-18–Phe-57 form a DNA-binding region, H-T-H motif. Gly-92 to Gly-97 contributes to the NAD(+) binding site.

The protein belongs to the transcriptional regulatory Rex family. Homodimer.

Its subcellular location is the cytoplasm. Its function is as follows. Modulates transcription in response to changes in cellular NADH/NAD(+) redox state. The chain is Redox-sensing transcriptional repressor Rex from Bacillus licheniformis (strain ATCC 14580 / DSM 13 / JCM 2505 / CCUG 7422 / NBRC 12200 / NCIMB 9375 / NCTC 10341 / NRRL NRS-1264 / Gibson 46).